The following is a 395-amino-acid chain: Subtilisin-like protease 9 (395 aa).

The N-terminal stretch at 1 to 20 (MGFFRTLFSFSIFALSLADT) is a signal peptide. Positions 21 to 120 (SKFIGLDDVD…ADRVVKMAAL (100 aa)) are excised as a propeptide. One can recognise an Inhibitor I9 domain in the interval 36–117 (SYIVVMKGAV…YVEADRVVKM (82 aa)). Residues 128–395 (SWGLGRISHK…RRLLYNGSGA (268 aa)) form the Peptidase S8 domain. Active-site charge relay system residues include aspartate 160 and histidine 191. Residue asparagine 252 is glycosylated (N-linked (GlcNAc...) asparagine). Serine 341 acts as the Charge relay system in catalysis. The N-linked (GlcNAc...) asparagine glycan is linked to asparagine 391.

It belongs to the peptidase S8 family.

Its subcellular location is the secreted. In terms of biological role, secreted subtilisin-like serine protease with keratinolytic activity that contributes to pathogenicity. This Arthroderma otae (strain ATCC MYA-4605 / CBS 113480) (Microsporum canis) protein is Subtilisin-like protease 9 (SUB9).